The chain runs to 334 residues: Cytoplasmic envelopment protein 2 (334 aa).

This sequence belongs to the herpesviridae cytoplasmic envelopment protein 2 family. As to quaternary structure, interacts with cytoplasmic envelopment protein 3 and with the capsid.

It is found in the virion tegument. The protein localises to the host cytoplasm. The protein resides in the host nucleus. Plays a critical role in cytoplasmic virus egress. Participates in the final step of tegumentation and envelope acquisition within the host cytoplasm by directly interacting with the capsid. Upon virion binding to target cell, a signaling cascade is triggered to disrupt the interaction with the capsid, thereby preparing capsid uncoating. This Homo sapiens (Human) protein is Cytoplasmic envelopment protein 2 (ORF33).